The chain runs to 380 residues: Putative T-box protein 40 (380 aa).

Residues 11–192 (MAEEDRWLTQ…KNATFENRLD (182 aa)) constitute a DNA-binding region (T-box). Positions 188 to 215 (ENRLDGGNKRKNTNSREEPSSKRSKNET) are disordered. Residues 189-215 (NRLDGGNKRKNTNSREEPSSKRSKNET) show a composition bias toward basic and acidic residues.

The protein resides in the nucleus. This is Putative T-box protein 40 (tbx-40) from Caenorhabditis elegans.